We begin with the raw amino-acid sequence, 315 residues long: tRNA-dihydrouridine(16) synthase (315 aa).

Residues 7–9 (PME) and glutamine 68 each bind FMN. Residue cysteine 98 is the Proton donor of the active site. Residues lysine 139, 199–201 (NGE), and 223–224 (GR) contribute to the FMN site.

The protein belongs to the Dus family. DusC subfamily. FMN is required as a cofactor.

It carries out the reaction 5,6-dihydrouridine(16) in tRNA + NADP(+) = uridine(16) in tRNA + NADPH + H(+). The enzyme catalyses 5,6-dihydrouridine(16) in tRNA + NAD(+) = uridine(16) in tRNA + NADH + H(+). Functionally, catalyzes the synthesis of 5,6-dihydrouridine (D), a modified base found in the D-loop of most tRNAs, via the reduction of the C5-C6 double bond in target uridines. Specifically modifies U16 in tRNAs. This Shewanella oneidensis (strain ATCC 700550 / JCM 31522 / CIP 106686 / LMG 19005 / NCIMB 14063 / MR-1) protein is tRNA-dihydrouridine(16) synthase.